A 207-amino-acid chain; its full sequence is High frequency lysogenization protein HflD homolog (207 aa).

It belongs to the HflD family.

It is found in the cytoplasm. Its subcellular location is the cell inner membrane. This is High frequency lysogenization protein HflD homolog from Pseudomonas fluorescens (strain SBW25).